The chain runs to 178 residues: Large ribosomal subunit protein uL6 (178 aa).

It belongs to the universal ribosomal protein uL6 family. Part of the 50S ribosomal subunit.

This protein binds to the 23S rRNA, and is important in its secondary structure. It is located near the subunit interface in the base of the L7/L12 stalk, and near the tRNA binding site of the peptidyltransferase center. The protein is Large ribosomal subunit protein uL6 of Francisella tularensis subsp. novicida (strain U112).